We begin with the raw amino-acid sequence, 214 residues long: MINTILGLILAYLLGSIPTGLWIGQIFFKKNLREYGSGNTGTTNTFRILGKTAGTVTFAIDFLKGTLATLLPLFLHINGISPMIFGLIAVLGHTFPIFAEFKGGKAVATSAGVVLGFSPLFFSYLIIIFIVTLYLGSMISLASIVVAGFAIISVLIFPLLGIILPSYDLLFTLIIILLASIILIRHRDNMERIKNKSENLIPWGINITKQVPKK.

5 helical membrane-spanning segments follow: residues 8 to 28 (LILAYLLGSIPTGLWIGQIFF), 70 to 90 (LLPLFLHINGISPMIFGLIAV), 111 to 131 (AGVVLGFSPLFFSYLIIIFIV), 144 to 164 (IVVAGFAIISVLIFPLLGIIL), and 165 to 185 (PSYDLLFTLIIILLASIILIR).

Belongs to the PlsY family. Probably interacts with PlsX.

The protein localises to the cell membrane. The catalysed reaction is an acyl phosphate + sn-glycerol 3-phosphate = a 1-acyl-sn-glycero-3-phosphate + phosphate. Its pathway is lipid metabolism; phospholipid metabolism. In terms of biological role, catalyzes the transfer of an acyl group from acyl-phosphate (acyl-PO(4)) to glycerol-3-phosphate (G3P) to form lysophosphatidic acid (LPA). This enzyme utilizes acyl-phosphate as fatty acyl donor, but not acyl-CoA or acyl-ACP. The chain is Glycerol-3-phosphate acyltransferase from Streptococcus gordonii (strain Challis / ATCC 35105 / BCRC 15272 / CH1 / DL1 / V288).